We begin with the raw amino-acid sequence, 456 residues long: Bifunctional protein GlmU (456 aa).

The interval 1-228 is pyrophosphorylase; sequence MSARLAAIVL…PQEIFGINDR (228 aa). Residues 10 to 13, Lys-24, Gln-75, and 80 to 81 each bind UDP-N-acetyl-alpha-D-glucosamine; these read LAAG and GT. A Mg(2+)-binding site is contributed by Asp-105. The UDP-N-acetyl-alpha-D-glucosamine site is built by Gly-142, Glu-157, Asn-172, and Asn-226. A Mg(2+)-binding site is contributed by Asn-226. Positions 229–249 are linker; that stretch reads LQLSQASRILNERTLVGLMLS. The tract at residues 250–456 is N-acetyltransferase; sequence GVTIVDPLRV…KAPYERTEDG (207 aa). 2 residues coordinate UDP-N-acetyl-alpha-D-glucosamine: Arg-331 and Lys-349. The active-site Proton acceptor is His-361. The UDP-N-acetyl-alpha-D-glucosamine site is built by Tyr-364 and Asn-375. Acetyl-CoA is bound by residues Ala-378, 384 to 385, Ala-421, and Arg-437; that span reads NY.

In the N-terminal section; belongs to the N-acetylglucosamine-1-phosphate uridyltransferase family. The protein in the C-terminal section; belongs to the transferase hexapeptide repeat family. Homotrimer. Requires Mg(2+) as cofactor.

It localises to the cytoplasm. It catalyses the reaction alpha-D-glucosamine 1-phosphate + acetyl-CoA = N-acetyl-alpha-D-glucosamine 1-phosphate + CoA + H(+). The catalysed reaction is N-acetyl-alpha-D-glucosamine 1-phosphate + UTP + H(+) = UDP-N-acetyl-alpha-D-glucosamine + diphosphate. It functions in the pathway nucleotide-sugar biosynthesis; UDP-N-acetyl-alpha-D-glucosamine biosynthesis; N-acetyl-alpha-D-glucosamine 1-phosphate from alpha-D-glucosamine 6-phosphate (route II): step 2/2. The protein operates within nucleotide-sugar biosynthesis; UDP-N-acetyl-alpha-D-glucosamine biosynthesis; UDP-N-acetyl-alpha-D-glucosamine from N-acetyl-alpha-D-glucosamine 1-phosphate: step 1/1. It participates in bacterial outer membrane biogenesis; LPS lipid A biosynthesis. Functionally, catalyzes the last two sequential reactions in the de novo biosynthetic pathway for UDP-N-acetylglucosamine (UDP-GlcNAc). The C-terminal domain catalyzes the transfer of acetyl group from acetyl coenzyme A to glucosamine-1-phosphate (GlcN-1-P) to produce N-acetylglucosamine-1-phosphate (GlcNAc-1-P), which is converted into UDP-GlcNAc by the transfer of uridine 5-monophosphate (from uridine 5-triphosphate), a reaction catalyzed by the N-terminal domain. This is Bifunctional protein GlmU from Gloeobacter violaceus (strain ATCC 29082 / PCC 7421).